The following is a 428-amino-acid chain: 5-methylthioadenosine/S-adenosylhomocysteine deaminase (428 aa).

The Zn(2+) site is built by H65 and H67. Residues E94, R158, and H184 each coordinate substrate. H211 is a binding site for Zn(2+). Positions 214 and 299 each coordinate substrate. D299 is a Zn(2+) binding site.

It belongs to the metallo-dependent hydrolases superfamily. MTA/SAH deaminase family. Zn(2+) is required as a cofactor.

It carries out the reaction S-adenosyl-L-homocysteine + H2O + H(+) = S-inosyl-L-homocysteine + NH4(+). The catalysed reaction is S-methyl-5'-thioadenosine + H2O + H(+) = S-methyl-5'-thioinosine + NH4(+). Catalyzes the deamination of 5-methylthioadenosine and S-adenosyl-L-homocysteine into 5-methylthioinosine and S-inosyl-L-homocysteine, respectively. Is also able to deaminate adenosine. This chain is 5-methylthioadenosine/S-adenosylhomocysteine deaminase, found in Moorella thermoacetica (strain ATCC 39073 / JCM 9320).